A 233-amino-acid chain; its full sequence is 2-C-methyl-D-erythritol 4-phosphate cytidylyltransferase (233 aa).

Belongs to the IspD/TarI cytidylyltransferase family. IspD subfamily.

The enzyme catalyses 2-C-methyl-D-erythritol 4-phosphate + CTP + H(+) = 4-CDP-2-C-methyl-D-erythritol + diphosphate. The protein operates within isoprenoid biosynthesis; isopentenyl diphosphate biosynthesis via DXP pathway; isopentenyl diphosphate from 1-deoxy-D-xylulose 5-phosphate: step 2/6. Catalyzes the formation of 4-diphosphocytidyl-2-C-methyl-D-erythritol from CTP and 2-C-methyl-D-erythritol 4-phosphate (MEP). The chain is 2-C-methyl-D-erythritol 4-phosphate cytidylyltransferase from Gloeobacter violaceus (strain ATCC 29082 / PCC 7421).